The chain runs to 425 residues: Dihydroorotase (425 aa).

Zn(2+)-binding residues include His-58 and His-60. Substrate-binding positions include 60 to 62 and Asn-92; that span reads HFR. Asp-150, His-177, and His-230 together coordinate Zn(2+). Residue Asn-276 participates in substrate binding. Asp-303 contacts Zn(2+). The active site involves Asp-303. Substrate is bound by residues His-307 and 321-322; that span reads FG.

Belongs to the metallo-dependent hydrolases superfamily. DHOase family. Class I DHOase subfamily. Requires Zn(2+) as cofactor.

It carries out the reaction (S)-dihydroorotate + H2O = N-carbamoyl-L-aspartate + H(+). It participates in pyrimidine metabolism; UMP biosynthesis via de novo pathway; (S)-dihydroorotate from bicarbonate: step 3/3. Functionally, catalyzes the reversible cyclization of carbamoyl aspartate to dihydroorotate. The sequence is that of Dihydroorotase from Pediococcus pentosaceus (strain ATCC 25745 / CCUG 21536 / LMG 10740 / 183-1w).